The sequence spans 269 residues: Hydroxyethylthiazole kinase (269 aa).

Methionine 45 provides a ligand contact to substrate. Arginine 121 and threonine 167 together coordinate ATP. Residue glycine 194 coordinates substrate.

Belongs to the Thz kinase family. Mg(2+) is required as a cofactor.

The enzyme catalyses 5-(2-hydroxyethyl)-4-methylthiazole + ATP = 4-methyl-5-(2-phosphooxyethyl)-thiazole + ADP + H(+). It participates in cofactor biosynthesis; thiamine diphosphate biosynthesis; 4-methyl-5-(2-phosphoethyl)-thiazole from 5-(2-hydroxyethyl)-4-methylthiazole: step 1/1. Functionally, catalyzes the phosphorylation of the hydroxyl group of 4-methyl-5-beta-hydroxyethylthiazole (THZ). This is Hydroxyethylthiazole kinase from Bacillus cytotoxicus (strain DSM 22905 / CIP 110041 / 391-98 / NVH 391-98).